Here is a 722-residue protein sequence, read N- to C-terminus: Bifunctional UDP-N-acetylglucosamine 2-epimerase/N-acetylmannosamine kinase (722 aa).

UDP is bound by residues Arg19, Ser23, Arg113, His220, and Asn253. CMP-N-acetyl-beta-neuraminate is bound by residues Lys259, Glu271, Lys280, and His281. 5 residues coordinate UDP: Val282, Ser301, Ser302, Glu307, and Arg321. The tract at residues 406 to 722 is N-acetylmannosamine kinase; the sequence is TLSALAVDLG…VLDYTTRRIH (317 aa). Asp413 provides a ligand contact to Mg(2+). Residue Gly416 participates in an N-acyl-D-mannosamine 6-phosphate binding. ADP-binding residues include Thr417, Asn418, and Arg420. An N-acyl-D-mannosamine 6-phosphate is bound by residues Gly476, Arg477, Thr489, Asn516, Asp517, and Gly545. An N-acyl-D-mannosamine-binding residues include Gly476, Arg477, Thr489, Asn516, and Asp517. Residue Asp517 is part of the active site. The an N-acyl-D-mannosamine site is built by Glu566 and His569. An an N-acyl-D-mannosamine 6-phosphate-binding site is contributed by His569. Residues His569, Cys579, Cys581, and Cys586 each coordinate Zn(2+). An N-acyl-D-mannosamine 6-phosphate is bound at residue Glu588. Residue Glu588 coordinates an N-acyl-D-mannosamine.

In the N-terminal section; belongs to the UDP-N-acetylglucosamine 2-epimerase family. The protein in the C-terminal section; belongs to the ROK (NagC/XylR) family. Homodimer. Homotetramer. Homohexamer. The hexameric form exhibits both enzyme activities, whereas the dimeric form only catalyzes the phosphorylation of N-acyl-D-mannosamine. Phosphorylated. Phosphorylation by PKC activates the UDP-N-acetylglucosamine 2-epimerase activity. In terms of tissue distribution, widely expressed. Highest expression in liver. Also found at high levels in lung, brain and kidney.

The protein resides in the cytoplasm. The protein localises to the cytosol. The catalysed reaction is UDP-N-acetyl-alpha-D-glucosamine + H2O = aldehydo-N-acetyl-D-mannosamine + UDP + H(+). The enzyme catalyses an N-acyl-D-mannosamine + ATP = an N-acyl-D-mannosamine 6-phosphate + ADP + H(+). Its pathway is amino-sugar metabolism; N-acetylneuraminate biosynthesis. Its activity is regulated as follows. The UDP-N-acetylglucosamine 2-epimerase activity, in contrast to the N-acetylmannosamine kinase activity, exhibits allosteric regulation by cytidine monophosphate-N-acetylneuraminic acid (CMP-Neu5Ac), the end product of neuraminic acid biosynthesis. Moreover, the activity is contingent upon the oligomeric state of the enzyme. The monomeric form is inactive, while the dimeric form selectively catalyzes the phosphorylation of N-acetylmannosamine. The hexameric form, on the other hand, demonstrates full proficiency in both enzyme activities. Furthermore, the UDP-N-acetylglucosamine 2-epimerase activity is increased by PKC-mediated phosphorylation. In terms of biological role, bifunctional enzyme that possesses both UDP-N-acetylglucosamine 2-epimerase and N-acetylmannosamine kinase activities, and serves as the initiator of the biosynthetic pathway leading to the production of N-acetylneuraminic acid (NeuAc), a critical precursor in the synthesis of sialic acids. By catalyzing this pivotal and rate-limiting step in sialic acid biosynthesis, this enzyme assumes a pivotal role in governing the regulation of cell surface sialylation, playing a role in embryonic angiogenesis. Sialic acids represent a category of negatively charged sugars that reside on the surface of cells as terminal components of glycoconjugates and mediate important functions in various cellular processes, including cell adhesion, signal transduction, and cellular recognition. In Mus musculus (Mouse), this protein is Bifunctional UDP-N-acetylglucosamine 2-epimerase/N-acetylmannosamine kinase.